Here is a 354-residue protein sequence, read N- to C-terminus: S-adenosylmethionine:tRNA ribosyltransferase-isomerase (354 aa).

Belongs to the QueA family. Monomer.

It is found in the cytoplasm. It catalyses the reaction 7-aminomethyl-7-carbaguanosine(34) in tRNA + S-adenosyl-L-methionine = epoxyqueuosine(34) in tRNA + adenine + L-methionine + 2 H(+). It functions in the pathway tRNA modification; tRNA-queuosine biosynthesis. Its function is as follows. Transfers and isomerizes the ribose moiety from AdoMet to the 7-aminomethyl group of 7-deazaguanine (preQ1-tRNA) to give epoxyqueuosine (oQ-tRNA). The protein is S-adenosylmethionine:tRNA ribosyltransferase-isomerase of Azorhizobium caulinodans (strain ATCC 43989 / DSM 5975 / JCM 20966 / LMG 6465 / NBRC 14845 / NCIMB 13405 / ORS 571).